We begin with the raw amino-acid sequence, 285 residues long: Acetylglutamate kinase (285 aa).

Substrate contacts are provided by residues 64–65, Arg-86, and Asn-181; that span reads GG.

It belongs to the acetylglutamate kinase family. ArgB subfamily.

Its subcellular location is the cytoplasm. The enzyme catalyses N-acetyl-L-glutamate + ATP = N-acetyl-L-glutamyl 5-phosphate + ADP. The protein operates within amino-acid biosynthesis; L-arginine biosynthesis; N(2)-acetyl-L-ornithine from L-glutamate: step 2/4. Functionally, catalyzes the ATP-dependent phosphorylation of N-acetyl-L-glutamate. The polypeptide is Acetylglutamate kinase (Clostridium beijerinckii (strain ATCC 51743 / NCIMB 8052) (Clostridium acetobutylicum)).